We begin with the raw amino-acid sequence, 633 residues long: Chaperone protein DnaK (633 aa).

Residue Thr198 is modified to Phosphothreonine; by autocatalysis. The tract at residues 599 to 633 (QQASQETPGDGDAGAAGAKKKDDDDVVDADYEEVK) is disordered. Acidic residues predominate over residues 622–633 (DDVVDADYEEVK).

It belongs to the heat shock protein 70 family.

Functionally, acts as a chaperone. The polypeptide is Chaperone protein DnaK (Desulfotalea psychrophila (strain LSv54 / DSM 12343)).